Here is a 187-residue protein sequence, read N- to C-terminus: Sliding-clamp-loader small subunit (187 aa).

Belongs to the Tevenvirinae sliding-clamp-loader small subunit family. The sliding-clamp-loader consists of 4 large subunits and 1 small subunit. Interacts with the sliding clamp; this interaction allows the sliding-clamp-loader to open the sliding clamp. Part of the replicase complex that includes the DNA polymerase, the polymerase clamp, the clamp loader complex, the single-stranded DNA binding protein, the primase, the helicase and the helicase assembly factor.

In terms of biological role, forms the sliding-clamp-loader together with the small subunit. The clamp loader holds the clamp in an open conformation and places it onto the DNA. This is Sliding-clamp-loader small subunit (62) from Escherichia coli (Bacteriophage T4).